Consider the following 72-residue polypeptide: Translation initiation factor IF-1 (72 aa).

The S1-like domain occupies Met1 to Arg72.

It belongs to the IF-1 family. As to quaternary structure, component of the 30S ribosomal translation pre-initiation complex which assembles on the 30S ribosome in the order IF-2 and IF-3, IF-1 and N-formylmethionyl-tRNA(fMet); mRNA recruitment can occur at any time during PIC assembly.

It is found in the cytoplasm. In terms of biological role, one of the essential components for the initiation of protein synthesis. Stabilizes the binding of IF-2 and IF-3 on the 30S subunit to which N-formylmethionyl-tRNA(fMet) subsequently binds. Helps modulate mRNA selection, yielding the 30S pre-initiation complex (PIC). Upon addition of the 50S ribosomal subunit IF-1, IF-2 and IF-3 are released leaving the mature 70S translation initiation complex. In Haemophilus ducreyi (strain 35000HP / ATCC 700724), this protein is Translation initiation factor IF-1.